We begin with the raw amino-acid sequence, 553 residues long: Membrane protein insertase YidC (553 aa).

Helical transmembrane passes span 7–24, 365–385, 435–455, 474–494, and 509–529; these read VLWV…DNWQ, WGWA…PLSA, LPVV…LASV, PFFI…SLNP, and PIAF…YYVV.

Belongs to the OXA1/ALB3/YidC family. Type 1 subfamily. As to quaternary structure, interacts with the Sec translocase complex via SecD. Specifically interacts with transmembrane segments of nascent integral membrane proteins during membrane integration.

It is found in the cell inner membrane. Its function is as follows. Required for the insertion and/or proper folding and/or complex formation of integral membrane proteins into the membrane. Involved in integration of membrane proteins that insert both dependently and independently of the Sec translocase complex, as well as at least some lipoproteins. Aids folding of multispanning membrane proteins. In Burkholderia orbicola (strain MC0-3), this protein is Membrane protein insertase YidC.